A 435-amino-acid chain; its full sequence is Tol-Pal system protein TolB (435 aa).

The N-terminal stretch at 1 to 20 (MRKIIAGVFIFVFLISNLYA) is a signal peptide.

Belongs to the TolB family. In terms of assembly, the Tol-Pal system is composed of five core proteins: the inner membrane proteins TolA, TolQ and TolR, the periplasmic protein TolB and the outer membrane protein Pal. They form a network linking the inner and outer membranes and the peptidoglycan layer.

The protein resides in the periplasm. Part of the Tol-Pal system, which plays a role in outer membrane invagination during cell division and is important for maintaining outer membrane integrity. This chain is Tol-Pal system protein TolB, found in Francisella tularensis subsp. mediasiatica (strain FSC147).